Consider the following 89-residue polypeptide: Large ribosomal subunit protein bL27 (89 aa).

Positions 1–23 (MAHKKAGGSSRNGRDSAGKRLGI) are disordered.

It belongs to the bacterial ribosomal protein bL27 family.

This chain is Large ribosomal subunit protein bL27, found in Rhodopseudomonas palustris (strain BisA53).